Here is a 288-residue protein sequence, read N- to C-terminus: MSRVANNRDWADDEDLEDSNELPQSTTTTNKDGTQTIVTWRFNDDGKKVKTTRRIRFTKVKEIVNPRVAERKSWGKFGLSQKDAAGPASDTTSVGENIIFRPSTNWRKDAKEEVSDAGAMKNKLKDKQVKCRICSGEHFTAKCPFKGTMAPLGEEGAVDVAAGHADTPEGPGGLGAGKSSYVPPHLRNGGTAGGERMGGGKFERDDLATLRVTNVSEMAEEQELRDMFERFGRVTRVFLAKDRETGLAKGFAFISFQERSDAAKACEKMDGYGFKHLILRVEFAKKAS.

The disordered stretch occupies residues 1-35 (MSRVANNRDWADDEDLEDSNELPQSTTTTNKDGTQ). Residues 11 to 20 (ADDEDLEDSN) show a composition bias toward acidic residues. Residues 21–35 (ELPQSTTTTNKDGTQ) show a composition bias toward polar residues. The RRM domain occupies 208–286 (ATLRVTNVSE…LILRVEFAKK (79 aa)).

This sequence belongs to the eIF-3 subunit G family. As to quaternary structure, component of the eukaryotic translation initiation factor 3 (eIF-3) complex.

It localises to the cytoplasm. Functionally, RNA-binding component of the eukaryotic translation initiation factor 3 (eIF-3) complex, which is involved in protein synthesis of a specialized repertoire of mRNAs and, together with other initiation factors, stimulates binding of mRNA and methionyl-tRNAi to the 40S ribosome. The eIF-3 complex specifically targets and initiates translation of a subset of mRNAs involved in cell proliferation. This subunit can bind 18S rRNA. This Botryotinia fuckeliana (strain B05.10) (Noble rot fungus) protein is Eukaryotic translation initiation factor 3 subunit G (tif35).